The sequence spans 180 residues: Trafficking protein particle complex subunit 3 (180 aa).

Cys-68 is lipidated: S-palmitoyl cysteine.

Belongs to the TRAPP small subunits family. BET3 subfamily. Homodimer. Component of the multisubunit transport protein particle (TRAPP) complex, which includes at least TRAPPC2, TRAPPC2L, TRAPPC3, TRAPPC3L, TRAPPC4, TRAPPC5, TRAPPC8, TRAPPC9, TRAPPC10, TRAPPC11 and TRAPPC12. Heterodimer with TRAPPC6A. The heterodimer TRAPPC3-TRAPPC6A interacts with TRAPPC2L. Heterodimer with TRAPPC6b. The heterodimer TRAPPC6B-TRAPPC3 interacts with TRAPPC1 likely providing a core for TRAPP complex formation. As to expression, widely expressed. Expressed in lung, heart, liver, spleen, brain and kidney.

It is found in the golgi apparatus. It localises to the cis-Golgi network. Its subcellular location is the endoplasmic reticulum. Functionally, may play a role in vesicular transport from endoplasmic reticulum to Golgi. This Mus musculus (Mouse) protein is Trafficking protein particle complex subunit 3.